The following is a 426-amino-acid chain: MLGALFLSTAASAAVQSIDKVVAIVDNDVVMQSQLDQRVHEVQQTIAKRGGGVPPTSVLEQQVLERLIVENLQLQIGERSGIRITDEELNQAIGTIAQRNSMSIEQFRAALAHDGLSYEDARDQVRREMIISRVRQRRVAERIQVSEQEVKNFLASDLGKMQLSEELHLANILIPTPESANSEAIQSAARQAMEVYQQLKQGADFAQLAIARSGSDNALEGGDMGWRKAAQLPPPFDRELSAMAVGDITQPARTPGGFIILKLLDKRGGGNQVRDEVHVRHILIKPSEIRSEEETKRLAQKLYDRIEAGEDFAELAKSYSEDPGSALNGGDLNWIDPNALVPEFREVMAKTPQGQLSKPFKSPYGWHVLEVLGRRATDSTSQAREQQAMTVLRNRKYDEELQTWLRQIRDEAYVEIKLPGAEQAAQ.

The first 13 residues, 1–13, serve as a signal peptide directing secretion; sequence MLGALFLSTAASA. 2 PpiC domains span residues 164–265 and 274–373; these read SEEL…KLLD and RDEV…EVLG.

The protein localises to the periplasm. It catalyses the reaction [protein]-peptidylproline (omega=180) = [protein]-peptidylproline (omega=0). In terms of biological role, chaperone involved in the correct folding and assembly of outer membrane proteins. Recognizes specific patterns of aromatic residues and the orientation of their side chains, which are found more frequently in integral outer membrane proteins. May act in both early periplasmic and late outer membrane-associated steps of protein maturation. The chain is Chaperone SurA from Pseudomonas fluorescens (strain ATCC BAA-477 / NRRL B-23932 / Pf-5).